A 209-amino-acid chain; its full sequence is Orotate phosphoribosyltransferase (209 aa).

Residues Arg-96, Lys-100, His-102, and 122 to 130 (EDLISTGGS) contribute to the 5-phospho-alpha-D-ribose 1-diphosphate site. An orotate-binding site is contributed by Ser-126.

The protein belongs to the purine/pyrimidine phosphoribosyltransferase family. PyrE subfamily. Homodimer. Requires Mg(2+) as cofactor.

The enzyme catalyses orotidine 5'-phosphate + diphosphate = orotate + 5-phospho-alpha-D-ribose 1-diphosphate. It functions in the pathway pyrimidine metabolism; UMP biosynthesis via de novo pathway; UMP from orotate: step 1/2. In terms of biological role, catalyzes the transfer of a ribosyl phosphate group from 5-phosphoribose 1-diphosphate to orotate, leading to the formation of orotidine monophosphate (OMP). The protein is Orotate phosphoribosyltransferase of Streptococcus pyogenes serotype M5 (strain Manfredo).